A 415-amino-acid polypeptide reads, in one-letter code: 4-hydroxy-3-methylbut-2-en-1-yl diphosphate synthase (flavodoxin) (415 aa).

Positions 298, 301, 344, and 351 each coordinate [4Fe-4S] cluster.

It belongs to the IspG family. It depends on [4Fe-4S] cluster as a cofactor.

The catalysed reaction is (2E)-4-hydroxy-3-methylbut-2-enyl diphosphate + oxidized [flavodoxin] + H2O + 2 H(+) = 2-C-methyl-D-erythritol 2,4-cyclic diphosphate + reduced [flavodoxin]. Its pathway is isoprenoid biosynthesis; isopentenyl diphosphate biosynthesis via DXP pathway; isopentenyl diphosphate from 1-deoxy-D-xylulose 5-phosphate: step 5/6. Its function is as follows. Converts 2C-methyl-D-erythritol 2,4-cyclodiphosphate (ME-2,4cPP) into 1-hydroxy-2-methyl-2-(E)-butenyl 4-diphosphate. In Solibacter usitatus (strain Ellin6076), this protein is 4-hydroxy-3-methylbut-2-en-1-yl diphosphate synthase (flavodoxin).